Consider the following 426-residue polypeptide: Glutamate-1-semialdehyde 2,1-aminomutase (426 aa).

K265 is modified (N6-(pyridoxal phosphate)lysine).

This sequence belongs to the class-III pyridoxal-phosphate-dependent aminotransferase family. HemL subfamily. In terms of assembly, homodimer. Pyridoxal 5'-phosphate is required as a cofactor.

It localises to the cytoplasm. It catalyses the reaction (S)-4-amino-5-oxopentanoate = 5-aminolevulinate. It participates in porphyrin-containing compound metabolism; protoporphyrin-IX biosynthesis; 5-aminolevulinate from L-glutamyl-tRNA(Glu): step 2/2. The polypeptide is Glutamate-1-semialdehyde 2,1-aminomutase (Alcanivorax borkumensis (strain ATCC 700651 / DSM 11573 / NCIMB 13689 / SK2)).